We begin with the raw amino-acid sequence, 331 residues long: uncharacterized protein (331 aa).

Pentapeptide repeat domains follow at residues 50 to 89 (ENLQNADLSGFTLISVDFERTNLIGSNLQRTFLTKARLGH), 90 to 129 (CQMNWADLTYAKLNQADLSHADLTKASLYGAFAVKTNFKG), 140 to 179 (ANLRGANLEQTNLTGANLFAANLREANFQKADFSWANLQE), 185 to 224 (ANLRDARLWATDLRRAFMKEMDLSALSLHGLAMDGAKLTG), and 230 to 269 (TNLSHSSLRGANLRGADLTGANLTGVDLTGADLMGANLTQ).

This is an uncharacterized protein from Synechocystis sp. (strain ATCC 27184 / PCC 6803 / Kazusa).